Here is a 218-residue protein sequence, read N- to C-terminus: Small ribosomal subunit protein uS3c (218 aa).

In terms of domain architecture, KH type-2 spans 47–118 (IQKTIKISSG…KLNIAITRIA (72 aa)).

This sequence belongs to the universal ribosomal protein uS3 family. Part of the 30S ribosomal subunit.

It localises to the plastid. It is found in the chloroplast. This chain is Small ribosomal subunit protein uS3c (rps3), found in Lotus japonicus (Lotus corniculatus var. japonicus).